Here is a 1024-residue protein sequence, read N- to C-terminus: Beta-galactosidase 2 (1024 aa).

2 residues coordinate substrate: Asn-103 and Asp-202. Asp-202 serves as a coordination point for Na(+). Mg(2+) is bound by residues Glu-417, His-419, and Glu-462. Residues Glu-462 and 538 to 541 (EYAH) each bind substrate. Glu-462 functions as the Proton donor in the catalytic mechanism. Glu-538 functions as the Nucleophile in the catalytic mechanism. Asn-598 serves as a coordination point for Mg(2+). Positions 602 and 605 each coordinate Na(+). Residues Asn-605 and Trp-1000 each contribute to the substrate site.

Belongs to the glycosyl hydrolase 2 family. As to quaternary structure, homotetramer. Mg(2+) serves as cofactor. The cofactor is Na(+).

The enzyme catalyses Hydrolysis of terminal non-reducing beta-D-galactose residues in beta-D-galactosides.. In Klebsiella pneumoniae subsp. pneumoniae (strain ATCC 700721 / MGH 78578), this protein is Beta-galactosidase 2.